We begin with the raw amino-acid sequence, 472 residues long: Pentatricopeptide repeat-containing protein At5g46100 (472 aa).

11 PPR repeats span residues 50-84 (DQSSFGYMVLRLVSANKFKAAEDLIVRMKIENCVV), 85-119 (SEDILLSICRGYGRVHRPFDSLRVFHKMKDFDCDP), 120-154 (SQKAYVTVLAILVEENQLNLAFKFYKNMREIGLPP), 155-190 (TVASLNVLIKALCRNDGTVDAGLKIFLEMPKRGCDP), 191-225 (DSYTYGTLISGLCRFGRIDEAKKLFTEMVEKDCAP), 226-260 (TVVTYTSLINGLCGSKNVDEAMRYLEEMKSKGIEP), 261-295 (NVFTYSSLMDGLCKDGRSLQAMELFEMMMARGCRP), 296-330 (NMVTYTTLITGLCKEQKIQEAVELLDRMNLQGLKP), 331-365 (DAGLYGKVISGFCAISKFREAANFLDEMILGGITP), 373-406 (HVKTSNEVVRGLCANYPSRAFTLYLSMRSRGISV), and 407-441 (EVETLESLVKCLCKKGEFQKAVQLVDEIVTDGCIP).

It belongs to the PPR family. P subfamily.

The protein is Pentatricopeptide repeat-containing protein At5g46100 of Arabidopsis thaliana (Mouse-ear cress).